The sequence spans 576 residues: Protein O-linked-mannose beta-1,4-N-acetylglucosaminyltransferase 2 (576 aa).

The Cytoplasmic segment spans residues 1–4; sequence MNIS. Residues 5 to 25 traverse the membrane as a helical; Signal-anchor for type II membrane protein segment; the sequence is AVFNALLVSIMAAVLWKHVKL. At 26-576 the chain is on the lumenal side; sequence LEQFYVIEEE…PFAEVLVCNT (551 aa). N-linked (GlcNAc...) asparagine glycans are attached at residues asparagine 98, asparagine 275, asparagine 335, asparagine 451, asparagine 539, and asparagine 561. In terms of domain architecture, Fibronectin type-III spans 482–576; that stretch reads RESKCQASAQ…PFAEVLVCNT (95 aa).

Belongs to the glycosyltransferase 61 family.

It is found in the endoplasmic reticulum membrane. The catalysed reaction is 3-O-(alpha-D-mannosyl)-L-threonyl-[protein] + UDP-N-acetyl-alpha-D-glucosamine = 3-O-(N-acetyl-beta-D-glucosaminyl-(1-&gt;4)-alpha-D-mannosyl)-L-threonyl-[protein] + UDP + H(+). The protein operates within protein modification; protein glycosylation. Functionally, O-linked mannose beta-1,4-N-acetylglucosaminyltransferase that transfers UDP-N-acetyl-D-glucosamine to the 4-position of the mannose to generate N-acetyl-D-glucosamine-beta-1,4-O-D-mannosylprotein. Involved in the biosynthesis of the phosphorylated O-mannosyl trisaccharide (N-acetylgalactosamine-beta-3-N-acetylglucosamine-beta-4-(phosphate-6-)mannose), a carbohydrate structure present in alpha-dystroglycan (DAG1), which is required for binding laminin G-like domain-containing extracellular proteins with high affinity. This chain is Protein O-linked-mannose beta-1,4-N-acetylglucosaminyltransferase 2 (pomgnt2), found in Xenopus tropicalis (Western clawed frog).